Reading from the N-terminus, the 228-residue chain is Adapter protein MecA (228 aa).

Belongs to the MecA family. Homodimer.

Its function is as follows. Enables the recognition and targeting of unfolded and aggregated proteins to the ClpC protease or to other proteins involved in proteolysis. This is Adapter protein MecA from Lacticaseibacillus paracasei (strain ATCC 334 / BCRC 17002 / CCUG 31169 / CIP 107868 / KCTC 3260 / NRRL B-441) (Lactobacillus paracasei).